Reading from the N-terminus, the 274-residue chain is Bis(5'-nucleosyl)-tetraphosphatase, symmetrical (274 aa).

It belongs to the Ap4A hydrolase family.

It carries out the reaction P(1),P(4)-bis(5'-adenosyl) tetraphosphate + H2O = 2 ADP + 2 H(+). Functionally, hydrolyzes diadenosine 5',5'''-P1,P4-tetraphosphate to yield ADP. In Shewanella baltica (strain OS195), this protein is Bis(5'-nucleosyl)-tetraphosphatase, symmetrical.